A 206-amino-acid polypeptide reads, in one-letter code: Small ribosomal subunit protein uS4 (206 aa).

The 61-residue stretch at 96–156 folds into the S4 RNA-binding domain; sequence GRLDNVVYRM…EKAKKQSRVK (61 aa).

It belongs to the universal ribosomal protein uS4 family. Part of the 30S ribosomal subunit. Contacts protein S5. The interaction surface between S4 and S5 is involved in control of translational fidelity.

One of the primary rRNA binding proteins, it binds directly to 16S rRNA where it nucleates assembly of the body of the 30S subunit. Functionally, with S5 and S12 plays an important role in translational accuracy. The sequence is that of Small ribosomal subunit protein uS4 from Enterobacter sp. (strain 638).